We begin with the raw amino-acid sequence, 190 residues long: Adenylate kinase (190 aa).

12 to 17 (GSGKTT) is a binding site for ATP. The NMP stretch occupies residues 34–63 (STGDLLREEVASGSEYGKTIDSFISKGNLV). AMP-binding positions include threonine 35, arginine 40, 61-63 (NLV), 88-91 (GYPR), and glutamine 95. The LID stretch occupies residues 130 to 136 (GRARGAD). Arginine 131 lines the ATP pocket. Residues arginine 133 and arginine 145 each coordinate AMP. Residue arginine 173 coordinates ATP.

This sequence belongs to the adenylate kinase family. In terms of assembly, monomer.

The protein resides in the cytoplasm. It catalyses the reaction AMP + ATP = 2 ADP. It participates in purine metabolism; AMP biosynthesis via salvage pathway; AMP from ADP: step 1/1. In terms of biological role, catalyzes the reversible transfer of the terminal phosphate group between ATP and AMP. Plays an important role in cellular energy homeostasis and in adenine nucleotide metabolism. The protein is Adenylate kinase of Helicobacter hepaticus (strain ATCC 51449 / 3B1).